The chain runs to 328 residues: D-cysteine desulfhydrase (328 aa).

Lysine 51 carries the N6-(pyridoxal phosphate)lysine modification.

It belongs to the ACC deaminase/D-cysteine desulfhydrase family. Homodimer. The cofactor is pyridoxal 5'-phosphate.

It carries out the reaction D-cysteine + H2O = hydrogen sulfide + pyruvate + NH4(+) + H(+). In terms of biological role, catalyzes the alpha,beta-elimination reaction of D-cysteine and of several D-cysteine derivatives. It could be a defense mechanism against D-cysteine. In Klebsiella pneumoniae subsp. pneumoniae (strain ATCC 700721 / MGH 78578), this protein is D-cysteine desulfhydrase.